Reading from the N-terminus, the 384-residue chain is Cytochrome b (384 aa).

The next 4 helical transmembrane spans lie at F32–M52, W76–A98, L113–C133, and F179–L199. H82 and H96 together coordinate heme b. Heme b-binding residues include H183 and H197. Position 202 (H202) interacts with a ubiquinone. Helical transmembrane passes span F225 to S245, M289 to D309, L321 to A341, and Y348 to P368.

The protein belongs to the cytochrome b family. Fungal cytochrome b-c1 complex contains 10 subunits; 3 respiratory subunits, 2 core proteins and 5 low-molecular weight proteins. Cytochrome b-c1 complex is a homodimer. Heme b is required as a cofactor.

The protein localises to the mitochondrion inner membrane. Functionally, component of the ubiquinol-cytochrome c reductase complex (complex III or cytochrome b-c1 complex) that is part of the mitochondrial respiratory chain. The b-c1 complex mediates electron transfer from ubiquinol to cytochrome c. Contributes to the generation of a proton gradient across the mitochondrial membrane that is then used for ATP synthesis. The chain is Cytochrome b (COB) from Starmerella bacillaris (Yeast).